The sequence spans 195 residues: dTTP/UTP pyrophosphatase (195 aa).

The active-site Proton acceptor is Asp-73.

It belongs to the Maf family. YhdE subfamily. The cofactor is a divalent metal cation.

Its subcellular location is the cytoplasm. The enzyme catalyses dTTP + H2O = dTMP + diphosphate + H(+). It catalyses the reaction UTP + H2O = UMP + diphosphate + H(+). Functionally, nucleoside triphosphate pyrophosphatase that hydrolyzes dTTP and UTP. May have a dual role in cell division arrest and in preventing the incorporation of modified nucleotides into cellular nucleic acids. In Deinococcus radiodurans (strain ATCC 13939 / DSM 20539 / JCM 16871 / CCUG 27074 / LMG 4051 / NBRC 15346 / NCIMB 9279 / VKM B-1422 / R1), this protein is dTTP/UTP pyrophosphatase.